The primary structure comprises 437 residues: GTPase Obg (437 aa).

One can recognise an Obg domain in the interval 2–160 (SMFLDTAKIS…RELQLELKIL (159 aa)). One can recognise an OBG-type G domain in the interval 161–338 (ADVGLVGFPS…LMDATAELLA (178 aa)). Residues 167–174 (GFPSVGKS), 192–196 (FTTIV), 214–217 (DLPG), 284–287 (NKMD), and 319–321 (SSL) each bind GTP. Mg(2+) contacts are provided by Ser-174 and Thr-194. In terms of domain architecture, OCT spans 359-437 (GFNEDERPFE…IGNFEFEFVD (79 aa)).

This sequence belongs to the TRAFAC class OBG-HflX-like GTPase superfamily. OBG GTPase family. In terms of assembly, monomer. It depends on Mg(2+) as a cofactor.

It localises to the cytoplasm. In terms of biological role, an essential GTPase which binds GTP, GDP and possibly (p)ppGpp with moderate affinity, with high nucleotide exchange rates and a fairly low GTP hydrolysis rate. Plays a role in control of the cell cycle, stress response, ribosome biogenesis and in those bacteria that undergo differentiation, in morphogenesis control. The polypeptide is GTPase Obg (Streptococcus agalactiae serotype Ia (strain ATCC 27591 / A909 / CDC SS700)).